Consider the following 397-residue polypeptide: LIM/homeobox protein Lhx9 (397 aa).

The interval 40–60 (RSKTESRLAKGGQMNGRETNM) is disordered. LIM zinc-binding domains are found at residues 69 to 130 (ALCA…RFSV) and 131 to 193 (QRCA…LLQG). A DNA-binding region (homeobox) is located at residues 267 to 326 (TKRMATSFKHHQLRTMKSYFAINHNPDAKDLKQLAQKTGLTKRVLQVWFQNARAKFRRNL). Disordered stretches follow at residues 330-363 (ENGG…TTLT) and 378-397 (SNLD…TNLF). Positions 353 to 363 (LTPPGTATTLT) are enriched in low complexity. Polar residues predominate over residues 387–397 (SPSQTTLTNLF).

It localises to the nucleus. May be involved in gonadal development. In Gallus gallus (Chicken), this protein is LIM/homeobox protein Lhx9 (LHX9).